Consider the following 590-residue polypeptide: Leucine-rich repeat transmembrane neuronal protein 4 (590 aa).

An N-terminal signal peptide occupies residues 1–30 (MGFRLITQLKGMSVLLVLFPTLLLVMLTGA). The LRRNT domain maps to 31-59 (QRACPKNCRCDGKIVYCESHAFADIPENI). Residues 31 to 424 (QRACPKNCRC…HEYEHVSFHK (394 aa)) lie on the Extracellular side of the membrane. The N-linked (GlcNAc...) asparagine glycan is linked to Asn58. LRR repeat units lie at residues 60-83 (SGGS…QFAG), 84-107 (LNQL…AFQG), 108-131 (IRRL…TFHP), 132-155 (VPNL…QFKG), 157-179 (RKLI…VFQD), 180-203 (CRNL…AFAG), 205-227 (LKLK…HFPR), 228-251 (LFNL…LTWT), 252-275 (WSSL…TFKC), and 276-299 (LPNL…TVNA). A glycan (N-linked (GlcNAc...) asparagine) is linked at Asn126. Asn291 carries N-linked (GlcNAc...) asparagine glycosylation. The LRRCT domain occupies 311 to 362 (NMWECSRSICPLFYWLKNFKGNKESTMICAGPKHIQGEKVSDAVETYNICSD). A helical membrane pass occupies residues 425–445 (IIAGSVALFLSVAMILLVIYV). Residues 446 to 590 (SWKRYPASMK…PAIYLERITN (145 aa)) are Cytoplasmic-facing.

It belongs to the LRRTM family. In terms of assembly, peripherally associated with AMPAR complex. AMPAR complex consists of an inner core made of 4 pore-forming GluA/GRIA proteins (GRIA1, GRIA2, GRIA3 and GRIA4) and 4 major auxiliary subunits arranged in a twofold symmetry. One of the two pairs of distinct binding sites is occupied either by CNIH2, CNIH3 or CACNG2, CACNG3. The other harbors CACNG2, CACNG3, CACNG4, CACNG8 or GSG1L. This inner core of AMPAR complex is complemented by outer core constituents binding directly to the GluA/GRIA proteins at sites distinct from the interaction sites of the inner core constituents. Outer core constituents include at least PRRT1, PRRT2, CKAMP44/SHISA9, FRRS1L and NRN1. The proteins of the inner and outer core serve as a platform for other, more peripherally associated AMPAR constituents, including LRRTM4. Alone or in combination, these auxiliary subunits control the gating and pharmacology of the AMPAR complex and profoundly impact their biogenesis and protein processing. In terms of tissue distribution, expressed in the brain (at protein level).

It localises to the cell membrane. It is found in the postsynaptic cell membrane. May play a role in the development and maintenance of the nervous system. Exhibits strong synaptogenic activity, restricted to excitatory presynaptic differentiation. This Rattus norvegicus (Rat) protein is Leucine-rich repeat transmembrane neuronal protein 4 (Lrrtm4).